A 599-amino-acid chain; its full sequence is Aspartate--tRNA(Asp/Asn) ligase (599 aa).

An L-aspartate-binding site is contributed by E172. The segment at 196 to 199 (QLFK) is aspartate. Residue R218 coordinates L-aspartate. Residues 218–220 (RDE) and Q227 contribute to the ATP site. Position 455 (H455) interacts with L-aspartate. E489 is an ATP binding site. R496 serves as a coordination point for L-aspartate. 541–544 (GLDR) contacts ATP.

The protein belongs to the class-II aminoacyl-tRNA synthetase family. Type 1 subfamily. As to quaternary structure, homodimer.

It localises to the cytoplasm. The enzyme catalyses tRNA(Asx) + L-aspartate + ATP = L-aspartyl-tRNA(Asx) + AMP + diphosphate. Its function is as follows. Aspartyl-tRNA synthetase with relaxed tRNA specificity since it is able to aspartylate not only its cognate tRNA(Asp) but also tRNA(Asn). Reaction proceeds in two steps: L-aspartate is first activated by ATP to form Asp-AMP and then transferred to the acceptor end of tRNA(Asp/Asn). The chain is Aspartate--tRNA(Asp/Asn) ligase from Herminiimonas arsenicoxydans.